The sequence spans 284 residues: Protease HtpX homolog (284 aa).

Helical transmembrane passes span 7–26 (TYLL…MMLH) and 33–47 (IILA…YYMS). Zn(2+) is bound at residue His129. The active site involves Glu130. His133 contributes to the Zn(2+) binding site. The next 2 membrane-spanning stretches (helical) occupy residues 148 to 168 (LAGA…IFFV) and 180 to 200 (IGTI…QFAI). Glu205 is a Zn(2+) binding site.

It belongs to the peptidase M48B family. Requires Zn(2+) as cofactor.

The protein resides in the cell membrane. This Methanocaldococcus jannaschii (strain ATCC 43067 / DSM 2661 / JAL-1 / JCM 10045 / NBRC 100440) (Methanococcus jannaschii) protein is Protease HtpX homolog.